The primary structure comprises 259 residues: Leucine-rich repeat-containing protein 3B (259 aa).

A signal peptide spans methionine 1–methionine 33. An LRRNT domain is found at cysteine 34–proline 64. Residue asparagine 47 is glycosylated (N-linked (GlcNAc...) asparagine). 3 LRR repeats span residues glutamate 65–aspartate 86, glutamine 89–glycine 110, and threonine 114–asparagine 135. The N-linked (GlcNAc...) asparagine glycan is linked to asparagine 94. Residues asparagine 145–leucine 197 enclose the LRRCT domain. The chain crosses the membrane as a helical span at residues alanine 205 to valine 225.

This sequence belongs to the LRRC3 family.

The protein localises to the membrane. The polypeptide is Leucine-rich repeat-containing protein 3B (LRRC3B) (Homo sapiens (Human)).